The sequence spans 302 residues: MSKNFDELLSRLKEVPTKKVAVAVAQDEPVLEAIKEATENNIAQAILVGDKQQIHEIAKKINLDLSDYEIMDIKDPKKATLEAVKLVSSGHADMLMKGLVDTATFLRSVLNKEVGLRTGKLMSHVAVFDVEGWDRLLFLTDAAFNTYPEFKDKVGMINNAVVVAHACGIDVPRVAPICPVEVVNTSMQSTVDAALLAKMSDRGQIKGCVIDGPFALDNAISEEAAHHKGVTGSVAGKADILLLPNIEAANVMYKTLTYFSKSRNGGLLVGTSAPVILTSRADSFETKVNSIALAALVAARNK.

The protein belongs to the phosphate acetyltransferase and butyryltransferase family.

It carries out the reaction butanoyl-CoA + phosphate = butanoyl phosphate + CoA. It functions in the pathway lipid metabolism; butanoate metabolism. Its function is as follows. Catalyzes the conversion of butyryl-CoA through butyryl phosphate to butyrate. This Clostridium beijerinckii (strain ATCC 51743 / NCIMB 8052) (Clostridium acetobutylicum) protein is Phosphate butyryltransferase (ptb).